Here is a 368-residue protein sequence, read N- to C-terminus: Biotin synthase (368 aa).

The Radical SAM core domain occupies cysteine 74–arginine 309. Cysteine 92, cysteine 96, and cysteine 99 together coordinate [4Fe-4S] cluster. The [2Fe-2S] cluster site is built by cysteine 137, cysteine 174, cysteine 234, and arginine 304.

This sequence belongs to the radical SAM superfamily. Biotin synthase family. In terms of assembly, homodimer. [4Fe-4S] cluster is required as a cofactor. The cofactor is [2Fe-2S] cluster.

It carries out the reaction (4R,5S)-dethiobiotin + (sulfur carrier)-SH + 2 reduced [2Fe-2S]-[ferredoxin] + 2 S-adenosyl-L-methionine = (sulfur carrier)-H + biotin + 2 5'-deoxyadenosine + 2 L-methionine + 2 oxidized [2Fe-2S]-[ferredoxin]. It functions in the pathway cofactor biosynthesis; biotin biosynthesis; biotin from 7,8-diaminononanoate: step 2/2. Functionally, catalyzes the conversion of dethiobiotin (DTB) to biotin by the insertion of a sulfur atom into dethiobiotin via a radical-based mechanism. The polypeptide is Biotin synthase (Rippkaea orientalis (strain PCC 8801 / RF-1) (Cyanothece sp. (strain PCC 8801))).